Consider the following 80-residue polypeptide: MVKLSFTLRFGDVWVAENEEIVAKGHSLDELDRNLELELRKAGYKGRVEIFMKFDYSTIPEWMRQFHPHYFNRTVVFDLD.

The N-terminal stretch at 1–15 (MVKLSFTLRFGDVWV) is a signal peptide.

This is an uncharacterized protein from Archaeoglobus fulgidus (strain ATCC 49558 / DSM 4304 / JCM 9628 / NBRC 100126 / VC-16).